The sequence spans 272 residues: Glutamate racemase (272 aa).

Substrate-binding positions include 16 to 17 and 48 to 49; these read DS and YG. C79 (proton donor/acceptor) is an active-site residue. 80–81 is a substrate binding site; the sequence is NT. The active-site Proton donor/acceptor is C191. Substrate is bound at residue 192–193; the sequence is TH.

Belongs to the aspartate/glutamate racemases family.

It carries out the reaction L-glutamate = D-glutamate. The protein operates within cell wall biogenesis; peptidoglycan biosynthesis. Provides the (R)-glutamate required for cell wall biosynthesis. In Chlorobaculum parvum (strain DSM 263 / NCIMB 8327) (Chlorobium vibrioforme subsp. thiosulfatophilum), this protein is Glutamate racemase.